Here is a 441-residue protein sequence, read N- to C-terminus: POC1 centriolar protein homolog A (441 aa).

WD repeat units lie at residues Gly16–Arg55, Gly58–Ala97, Ala100–Ser139, Gln142–Ser181, Glu184–His223, Val226–Thr265, and Gly268–Pro307. Residues Asp347 to Pro376 form a disordered region. The segment covering Leu348–Ser361 has biased composition (basic and acidic residues). Residues Leu400–Ala427 are a coiled coil.

This sequence belongs to the WD repeat POC1 family. As to quaternary structure, interacts with pat.

It localises to the cytoplasm. It is found in the cytoskeleton. May play an important role in centriole assembly and/or stability and ciliogenesis. This chain is POC1 centriolar protein homolog A (poc1a), found in Xenopus laevis (African clawed frog).